The following is a 494-amino-acid chain: MKKQAFSSEQYLNLQRDHILERINQFDGKLYLEFGGKMLEDFHAARVLPGYEPDNKIKLLQEFKDQVEVVIAINASNIEHSKARGDLGISYDQEVLRLIDKFNELNIYVGSVVITQYSGQPAADAFRNQLEKNGITSYIHYPIKGYPTDINHIISPEGMGKNDYIKTSRNLIVVTAPGPGSGKLATCLSNMYHDQINGIKSGYAKFETFPVWNLPLHHPVNLAYEAATADLDDVNMIDPFHLETYGKTTVNYNRDIEIFPVLKRMLERILGESPYASPTDMGVNMVGFAITDDEAAKEASKQEIIRRYYQTVLDFKNERVPETAVKKIELLMNDLGITPEDRQVVVAARAKAEETGGSALALELPNGQIVTGKNSELFGPTAAALINAIKTSAGIDKDTKLIEPEVVKPIQGLKIDHLGSRNPRLHSNEILIALAITAANNVDAARAMEELDNLKGSEAHSTIILTDEDKNVLRKLGINVTFDPYYQYDKLYRK.

Belongs to the UPF0371 family.

This chain is UPF0371 protein STER_1332, found in Streptococcus thermophilus (strain ATCC BAA-491 / LMD-9).